A 519-amino-acid chain; its full sequence is Xylose import ATP-binding protein XylG (519 aa).

ABC transporter domains follow at residues 6 to 245 (MTMR…VGRE) and 262 to 507 (FEAR…IRPV). Residue 38–45 (GENGAGKS) participates in ATP binding.

This sequence belongs to the ABC transporter superfamily. Xylose importer (TC 3.A.1.2.4) family. As to quaternary structure, the complex is composed of two ATP-binding proteins (XylG), two transmembrane proteins (XylH) and a solute-binding protein (XylF).

It localises to the cell inner membrane. The catalysed reaction is D-xylose(out) + ATP + H2O = D-xylose(in) + ADP + phosphate + H(+). Its function is as follows. Part of the ABC transporter complex XylFGH involved in xylose import. Responsible for energy coupling to the transport system. This is Xylose import ATP-binding protein XylG from Paraburkholderia xenovorans (strain LB400).